A 316-amino-acid chain; its full sequence is Probable porphobilinogen deaminase (316 aa).

Cys234 is subject to S-(dipyrrolylmethanemethyl)cysteine.

Belongs to the HMBS family. Dipyrromethane serves as cofactor.

The catalysed reaction is 4 porphobilinogen + H2O = hydroxymethylbilane + 4 NH4(+). The protein operates within porphyrin-containing compound metabolism; protoporphyrin-IX biosynthesis; coproporphyrinogen-III from 5-aminolevulinate: step 2/4. In terms of biological role, tetrapolymerization of the monopyrrole PBG into the hydroxymethylbilane pre-uroporphyrinogen in several discrete steps. The sequence is that of Probable porphobilinogen deaminase from Methanosarcina barkeri (strain Fusaro / DSM 804).